Here is a 451-residue protein sequence, read N- to C-terminus: Tubulin alpha-1B chain (451 aa).

An MREC motif motif is present at residues 1–4 (MREC). GTP-binding residues include glycine 10, glutamine 11, alanine 12, and glutamine 15. The residue at position 40 (lysine 40) is an N6,N6,N6-trimethyllysine; alternate. Lysine 40 carries the post-translational modification N6-acetyllysine; alternate. Phosphoserine is present on serine 48. GTP contacts are provided by glutamate 71, alanine 99, serine 140, glycine 143, glycine 144, threonine 145, glycine 146, threonine 179, glutamate 183, asparagine 206, tyrosine 224, and asparagine 228. Glutamate 71 lines the Mg(2+) pocket. Serine 232 is subject to Phosphoserine. Leucine 252 contributes to the GTP binding site. The active site involves glutamate 254. Tyrosine 282 is modified (3'-nitrotyrosine). Residue lysine 326 forms a Glycyl lysine isopeptide (Lys-Gly) (interchain with G-Cter in ubiquitin) linkage. Arginine 339 carries the post-translational modification Omega-N-methylarginine. Residue lysine 370 forms a Glycyl lysine isopeptide (Lys-Gly) (interchain with G-Cter in ubiquitin) linkage. Residue serine 439 is modified to Phosphoserine. Glutamate 443 and glutamate 445 each carry 5-glutamyl polyglutamate. Position 451 is a 3'-nitrotyrosine (tyrosine 451).

Belongs to the tubulin family. In terms of assembly, heterodimer of alpha- and beta-tubulin. A typical microtubule is a hollow water-filled tube with an outer diameter of 25 nm and an inner diameter of 15 nM. Alpha-beta heterodimers associate head-to-tail to form protofilaments running lengthwise along the microtubule wall with the beta-tubulin subunit facing the microtubule plus end conferring a structural polarity. Microtubules usually have 13 protofilaments but different protofilament numbers can be found in some organisms and specialized cells. Interacts with gamma-tubulin; the interaction allows microtubules to nucleate from the gamma-tubulin ring complex (gTuRC). Nascent microtubule interacts (via alpha-tubulin MREC motif) with TTC5/STRAP; this interaction may result in tubulin mRNA-targeted degradation. Component of sperm flagellar doublet microtubules. Mg(2+) is required as a cofactor. Some glutamate residues at the C-terminus are polyglycylated, resulting in polyglycine chains on the gamma-carboxyl group. Glycylation is mainly limited to tubulin incorporated into axonemes (cilia and flagella) whereas glutamylation is prevalent in neuronal cells, centrioles, axonemes, and the mitotic spindle. Both modifications can coexist on the same protein on adjacent residues, and lowering polyglycylation levels increases polyglutamylation, and reciprocally. Cilia and flagella glycylation is required for their stability and maintenance. Flagella glycylation controls sperm motility. Post-translationally, some glutamate residues at the C-terminus are polyglutamylated, resulting in polyglutamate chains on the gamma-carboxyl group. Polyglutamylation plays a key role in microtubule severing by spastin (SPAST). SPAST preferentially recognizes and acts on microtubules decorated with short polyglutamate tails: severing activity by SPAST increases as the number of glutamates per tubulin rises from one to eight, but decreases beyond this glutamylation threshold. Glutamylation is also involved in cilia motility. In terms of processing, acetylation of alpha chains at Lys-40 is located inside the microtubule lumen. This modification has been correlated with increased microtubule stability, intracellular transport and ciliary assembly. Methylation of alpha chains at Lys-40 is found in mitotic microtubules and is required for normal mitosis and cytokinesis contributing to genomic stability. Post-translationally, nitration of Tyr-451 is irreversible and interferes with normal dynein intracellular distribution. In terms of processing, undergoes a tyrosination/detyrosination cycle, the cyclic removal and re-addition of a C-terminal tyrosine residue by the enzymes tubulin tyrosine carboxypeptidase (MATCAP1, VASH1 or VASH2) and tubulin tyrosine ligase (TTL), respectively. Tyrosination promotes microtubule interaction with CAP-Gly domain-containing proteins such as CLIP1, CLIP2 and DCTN1. Tyrosination regulates the initiation of dynein-dynactin motility via interaction with DCTN1, which brings the dynein-dynactin complex into contact with microtubules. In neurons, tyrosinated tubulins mediate the initiation of retrograde vesicle transport. Post-translationally, detyrosination is involved in metaphase plate congression by guiding chromosomes during mitosis: detyrosination promotes interaction with CENPE, promoting pole-proximal transport of chromosomes toward the equator. Detyrosination increases microtubules-dependent mechanotransduction in dystrophic cardiac and skeletal muscle. In cardiomyocytes, detyrosinated microtubules are required to resist to contractile compression during contraction: detyrosination promotes association with desmin (DES) at force-generating sarcomeres, leading to buckled microtubules and mechanical resistance to contraction.

Its subcellular location is the cytoplasm. It is found in the cytoskeleton. It carries out the reaction GTP + H2O = GDP + phosphate + H(+). Functionally, tubulin is the major constituent of microtubules, protein filaments consisting of alpha- and beta-tubulin heterodimers. Microtubules grow by the addition of GTP-tubulin dimers to the microtubule end, where a stabilizing cap forms. Below the cap, tubulin dimers are in GDP-bound state, owing to GTPase activity of alpha-tubulin. The chain is Tubulin alpha-1B chain (TUBA1B) from Pan troglodytes (Chimpanzee).